The following is a 49-amino-acid chain: Large ribosomal subunit protein bL33 (49 aa).

Belongs to the bacterial ribosomal protein bL33 family.

This chain is Large ribosomal subunit protein bL33, found in Streptococcus pyogenes serotype M18 (strain MGAS8232).